Consider the following 266-residue polypeptide: Glucosamine-6-phosphate deaminase (266 aa).

Catalysis depends on D72, which acts as the Proton acceptor; for enolization step. D141 serves as the catalytic For ring-opening step. H143 acts as the Proton acceptor; for ring-opening step in catalysis. E148 acts as the For ring-opening step in catalysis.

The protein belongs to the glucosamine/galactosamine-6-phosphate isomerase family. NagB subfamily. As to quaternary structure, homohexamer.

It carries out the reaction alpha-D-glucosamine 6-phosphate + H2O = beta-D-fructose 6-phosphate + NH4(+). It participates in amino-sugar metabolism; N-acetylneuraminate degradation; D-fructose 6-phosphate from N-acetylneuraminate: step 5/5. Its activity is regulated as follows. Allosterically activated by N-acetylglucosamine 6-phosphate (GlcNAc6P). Catalyzes the reversible isomerization-deamination of glucosamine 6-phosphate (GlcN6P) to form fructose 6-phosphate (Fru6P) and ammonium ion. In Pectobacterium atrosepticum (strain SCRI 1043 / ATCC BAA-672) (Erwinia carotovora subsp. atroseptica), this protein is Glucosamine-6-phosphate deaminase.